The following is a 428-amino-acid chain: Histone deacetylase 3 (428 aa).

The tract at residues 3-316 (KTVAYFYDPD…WTYETSLLVD (314 aa)) is histone deacetylase. His17, Gly21, and Lys25 together coordinate 1D-myo-inositol 1,4,5,6-tetrakisphosphate. His135 is a catalytic residue. Residues Asp170, His172, and Asp259 each coordinate Zn(2+). Arg265 contributes to the 1D-myo-inositol 1,4,5,6-tetrakisphosphate binding site. 2 stretches are compositionally biased toward basic and acidic residues: residues 386–405 (SYER…DNYS) and 415–428 (DGDH…DVEI). The interval 386–428 (SYERTDEPDPEERGSEDNYSRPEASNEFYDGDHDNDKESDVEI) is disordered.

Belongs to the histone deacetylase family. HD type 1 subfamily.

It is found in the nucleus. The protein resides in the chromosome. The protein localises to the cytoplasm. It localises to the cytosol. The catalysed reaction is N(6)-acetyl-L-lysyl-[histone] + H2O = L-lysyl-[histone] + acetate. It carries out the reaction N(6)-acetyl-L-lysyl-[protein] + H2O = L-lysyl-[protein] + acetate. The enzyme catalyses N(6)-(2E)-butenoyl-L-lysyl-[protein] + H2O = (2E)-2-butenoate + L-lysyl-[protein]. It catalyses the reaction N(6)-(2-hydroxyisobutanoyl)-L-lysyl-[protein] + H2O = 2-hydroxy-2-methylpropanoate + L-lysyl-[protein]. The catalysed reaction is N(6)-[(S)-lactoyl]-L-lysyl-[protein] + H2O = (S)-lactate + L-lysyl-[protein]. With respect to regulation, inositol tetraphosphate (1D-myo-inositol 1,4,5,6-tetrakisphosphate) promotes the histone deacetylase activity by acting as an intermolecular glue between hdac3 and N-Cor repressor complex components. Histone deacetylase that catalyzes the deacetylation of lysine residues on the N-terminal part of the core histones (H2A, H2B, H3 and H4), and some other non-histone substrates. Histone deacetylation gives a tag for epigenetic repression and plays an important role in transcriptional regulation, cell cycle progression and developmental events. Histone deacetylases act via the formation of large multiprotein complexes, such as N-Cor repressor complex, which activate the histone deacetylase activity. Participates in the BCL6 transcriptional repressor activity by deacetylating the H3 'Lys-27' (H3K27) on enhancer elements, antagonizing EP300 acetyltransferase activity and repressing proximal gene expression. Also functions as a deacetylase for non-histone targets. In addition to protein deacetylase activity, also acts as a protein-lysine deacylase by recognizing other acyl groups: catalyzes removal of (2E)-butenoyl (crotonyl), lactoyl (lactyl) and 2-hydroxyisobutanoyl (2-hydroxyisobutyryl) acyl groups from lysine residues, leading to protein decrotonylation, delactylation and de-2-hydroxyisobutyrylation, respectively. In Xenopus tropicalis (Western clawed frog), this protein is Histone deacetylase 3 (hdac3).